The following is a 175-amino-acid chain: Large ribosomal subunit protein uL10 (175 aa).

Belongs to the universal ribosomal protein uL10 family. In terms of assembly, part of the ribosomal stalk of the 50S ribosomal subunit. The N-terminus interacts with L11 and the large rRNA to form the base of the stalk. The C-terminus forms an elongated spine to which L12 dimers bind in a sequential fashion forming a multimeric L10(L12)X complex.

In terms of biological role, forms part of the ribosomal stalk, playing a central role in the interaction of the ribosome with GTP-bound translation factors. The chain is Large ribosomal subunit protein uL10 from Desulfotalea psychrophila (strain LSv54 / DSM 12343).